The sequence spans 289 residues: Protease HtpX (289 aa).

Transmembrane regions (helical) follow at residues 7–27 (LFLL…NIIF) and 38–58 (GGIL…SLFM). H144 serves as a coordination point for Zn(2+). Residue E145 is part of the active site. H148 lines the Zn(2+) pocket. The next 2 membrane-spanning stretches (helical) occupy residues 155 to 175 (VTMT…SRII) and 194 to 214 (LVFW…ATMI). E223 is a Zn(2+) binding site.

It belongs to the peptidase M48B family. Zn(2+) is required as a cofactor.

Its subcellular location is the cell inner membrane. In Actinobacillus pleuropneumoniae serotype 5b (strain L20), this protein is Protease HtpX.